The chain runs to 79 residues: Large ribosomal subunit protein uL24 (79 aa).

It belongs to the universal ribosomal protein uL24 family. As to quaternary structure, part of the 50S ribosomal subunit.

Its function is as follows. One of two assembly initiator proteins, it binds directly to the 5'-end of the 23S rRNA, where it nucleates assembly of the 50S subunit. Functionally, one of the proteins that surrounds the polypeptide exit tunnel on the outside of the subunit. In Lactobacillus johnsonii (strain CNCM I-12250 / La1 / NCC 533), this protein is Large ribosomal subunit protein uL24.